The primary structure comprises 267 residues: Phosphate import ATP-binding protein PstB 2 (267 aa).

The 242-residue stretch at 21–262 (LSTKDLHVYY…AKLQSTSDYV (242 aa)) folds into the ABC transporter domain. Residue 53-60 (GPSGCGKS) coordinates ATP.

Belongs to the ABC transporter superfamily. Phosphate importer (TC 3.A.1.7) family. As to quaternary structure, the complex is composed of two ATP-binding proteins (PstB), two transmembrane proteins (PstC and PstA) and a solute-binding protein (PstS).

The protein resides in the cell membrane. The enzyme catalyses phosphate(out) + ATP + H2O = ADP + 2 phosphate(in) + H(+). In terms of biological role, part of the ABC transporter complex PstSACB involved in phosphate import. Responsible for energy coupling to the transport system. The sequence is that of Phosphate import ATP-binding protein PstB 2 from Streptococcus mutans serotype c (strain ATCC 700610 / UA159).